Consider the following 129-residue polypeptide: Large ribosomal subunit protein bL12 (129 aa).

Residues 94-113 (TEGLPKTVKEKTSKSDAEDT) are disordered.

This sequence belongs to the bacterial ribosomal protein bL12 family. Homodimer. Part of the ribosomal stalk of the 50S ribosomal subunit. Forms a multimeric L10(L12)X complex, where L10 forms an elongated spine to which 2 to 4 L12 dimers bind in a sequential fashion. Binds GTP-bound translation factors.

Functionally, forms part of the ribosomal stalk which helps the ribosome interact with GTP-bound translation factors. Is thus essential for accurate translation. In Chlamydia pneumoniae (Chlamydophila pneumoniae), this protein is Large ribosomal subunit protein bL12.